The primary structure comprises 334 residues: Putative 2-hydroxyacid dehydrogenase UNK4.10 (334 aa).

NAD(+) is bound by residues 166 to 167, 244 to 246, and Asp270; these read GI and TAR. Residue Arg246 is part of the active site. Glu275 is a catalytic residue. Catalysis depends on His293, which acts as the Proton donor. 293–296 provides a ligand contact to NAD(+); it reads HLGT.

Belongs to the D-isomer specific 2-hydroxyacid dehydrogenase family.

The protein is Putative 2-hydroxyacid dehydrogenase UNK4.10 of Schizosaccharomyces pombe (strain 972 / ATCC 24843) (Fission yeast).